The sequence spans 1085 residues: Kinesin-like protein cut7 (1085 aa).

Positions 1 to 70 (MAPRVAPGGS…TDHALHDENE (70 aa)) are disordered. Positions 24–37 (PVSTPNSHFRSASN) are enriched in polar residues. In terms of domain architecture, Kinesin motor spans 72 to 421 (NINVVVRVRG…LEYAARAKSI (350 aa)). 159-166 (GQTGTGKT) lines the ATP pocket. 3 coiled-coil regions span residues 436–604 (LIKD…WNLK), 715–740 (ISSE…LRSL), and 897–955 (LALA…DSIK). 2 consecutive repeats follow at residues 987–998 (DESLCNLETTIE) and 999–1010 (DTSLVKLETTGD). A Phosphothreonine; by CDC2 modification is found at threonine 1011. The disordered stretch occupies residues 1049-1085 (YTSSNQTNEPDVYDKPSNSSRTSLLRSSRSAYSKMKR). Over residues 1065-1078 (SNSSRTSLLRSSRS) the composition is skewed to low complexity.

The protein belongs to the TRAFAC class myosin-kinesin ATPase superfamily. Kinesin family. BimC subfamily.

Its subcellular location is the cytoplasm. It localises to the cytoskeleton. It is found in the microtubule organizing center. The protein resides in the spindle pole body. In terms of biological role, could be a spindle pole body motor. On transition from G2 to M phase of the cell cycle, the spindle pole body duplicates; the daughter pole bodies seed microtubules which interdigitate to form a short spindle that elongates to span the nucleus at metaphase. Mutations at cut7 block spindle formation. The polypeptide is Kinesin-like protein cut7 (cut7) (Schizosaccharomyces pombe (strain 972 / ATCC 24843) (Fission yeast)).